Consider the following 920-residue polypeptide: MAHGEPYYSSKPDKDFNFGSTMARRQMTPTMVTKLPKFVRNSPQVYDWIVRGLIFPTTGKTYFQRVVVITGGFEDGTYGSFAFDGREWVEIYPIEHLNLMSSLKLIHKANALQERLRLSQEEKATLTLDVQFLQHENVRLKELISKPEPRKIQMKWIIVGAVLTFLSLIPGGYAQSQTNNTIFTDVIAACKYSTETLTENLDLRIKLALANITISDKLDAVRQILNFAFVPRSHWLRTVFYYIHYYEMWNIFMFVLAIGTVMRSTRPGTDLITLATSHLSGFRMAVLPTIPFHTTMTLWVMNTLMVCYYFDNLLAITMAILAPILGIIFLCFMEDSNYVSQIRGLIATAVLIAGGHACLTLTGTTTSLFVVILTCRFVRMATIFIGTRFEIRDANGKVVATVPTRIKNAAFDFFQRLKQSGVRVGVNEFVVIKPGALCVIDTPEGKGTGFFSGNDIVTAAHVVGNNTFVNVCYEGLMYEAKVRYMPEKDIAFITCPGDLHPTARLKLSKNPDYSCVTVMAYVNEDLVVSTAAAMVHGNTLSYAVRTQDGMSGAPVCDKYGRVLAVHQTNTGYTGGAVIIDPADFHPVKAPSQVELLKEEIERLKAQLNSAAENPSTVITQQPTATLEQKSVNDSDVVDLVRTAMEREMKILRDEINGILAPFLQKKKGKTKHGRGRVRRNLRKGVKLLTEEEYRELLEKGLDRETFLDLIDRIIGERSGYPDYDDEDYYDEDDDGWGMVGDDVEFDYTEVINFDQAKPTPAPRTTKPKPCPEPEAETQPLDLSQKKDKQLEHEQQVVKPTKPQKNDPQPYSQTYGKAPIWESYDFDWDEDDAKFILPAPPRLTKADEIVLGSKIVKLRTIIETAIKTQNYSALPEAVFELDKAAYEAGLEGFLQRVKSKNKAPKNYKGPQKTKGPKTIIH.

A run of 4 helical transmembrane segments spans residues 239–259, 286–306, 313–333, and 344–364; these read VFYY…LAIG, VLPT…TLMV, LLAI…LCFM, and GLIA…LTGT. Active-site charge relay system; for serine protease activity residues include His-461, Asp-489, and Ser-551. Tyr-693 carries the post-translational modification O-(5'-phospho-RNA)-tyrosine. Disordered stretches follow at residues 752 to 815 and 900 to 920; these read NFDQ…QTYG and NKAP…TIIH. Basic and acidic residues predominate over residues 783-795; that stretch reads SQKKDKQLEHEQQ. Residues 805–814 are compositionally biased toward polar residues; the sequence is NDPQPYSQTY.

This sequence belongs to the astroviridae polyprotein 1A family. In terms of assembly, monomer. Cleaved by the viral and host proteases. The protease is probably autocatalytically cleaved.

Its subcellular location is the host membrane. It catalyses the reaction RNA(n) + a ribonucleoside 5'-triphosphate = RNA(n+1) + diphosphate. Functionally, responsible for the cleavage of the polyprotein into functional products. In terms of biological role, protein covalently attached to the 5' extremity of the genomic and subgenomic RNAs. It may serve as a primer for the replicase. The protein is Non-structural polyprotein 1A (ORF1) of Homo sapiens (Human).